A 272-amino-acid polypeptide reads, in one-letter code: 2-amino-3,7-dideoxy-D-threo-hept-6-ulosonate synthase (272 aa).

Asp33 (proton acceptor) is an active-site residue. 1-deoxy-D-threo-hexo-2,5-diulose 6-phosphate is bound by residues Asp33–Ser37 and Tyr153–Arg155. Residue Tyr153 is the Proton donor of the active site. Lys184 serves as the catalytic Schiff-base intermediate with substrate. 1-deoxy-D-threo-hexo-2,5-diulose 6-phosphate is bound by residues Gly209 to Gly210 and Gly237 to Arg238.

It belongs to the DeoC/FbaB aldolase family. ADHS subfamily. As to quaternary structure, homodecamer.

It carries out the reaction 1-deoxy-D-threo-hexo-2,5-diulose 6-phosphate + L-aspartate 4-semialdehyde = 2,3-dioxopropyl phosphate + 2-amino-2,3,7-trideoxy-D-lyxo-hept-6-ulosonate. In terms of biological role, catalyzes a transaldol reaction between 6-deoxy-5-ketofructose 1-phosphate (DKFP) and L-aspartate semialdehyde (ASA) with an elimination of hydroxypyruvaldehyde phosphate to yield 2-amino-3,7-dideoxy-D-threo-hept-6-ulosonate (ADH). Plays a key role in an alternative pathway of the biosynthesis of 3-dehydroquinate (DHQ), which is involved in the canonical pathway for the biosynthesis of aromatic amino acids. This Methanococcus maripaludis (strain C5 / ATCC BAA-1333) protein is 2-amino-3,7-dideoxy-D-threo-hept-6-ulosonate synthase.